A 149-amino-acid chain; its full sequence is Ribonuclease VapC2 (149 aa).

The 139-residue stretch at isoleucine 11 to isoleucine 149 folds into the PINc domain. Mg(2+) contacts are provided by aspartate 14 and aspartate 116.

Belongs to the PINc/VapC protein family. Mg(2+) serves as cofactor.

In terms of biological role, toxic component of a type II toxin-antitoxin (TA) system. An RNase. Its cognate antitoxin is VapB2. This is Ribonuclease VapC2 from Methanocaldococcus jannaschii (strain ATCC 43067 / DSM 2661 / JAL-1 / JCM 10045 / NBRC 100440) (Methanococcus jannaschii).